Here is a 527-residue protein sequence, read N- to C-terminus: Catalase (527 aa).

A compositionally biased stretch (basic and acidic residues) spans 1–22 (MADNRDPASDQMKHWKEQRAAQ). The interval 1–42 (MADNRDPASDQMKHWKEQRAAQKPDVLTTGGGNPVGDKLNSL) is disordered. At Ala2 the chain carries Blocked amino end (Ala); alternate. N-acetylalanine; alternate is present on Ala2. The residue at position 9 (Ser9) is a Phosphoserine. Lys13 bears the N6-succinyllysine mark. Catalysis depends on residues His75 and Asn148. The NADP(+) site is built by His194, Phe198, Ser201, Arg203, Asn213, and Tyr215. Residue Lys221 is modified to N6-succinyllysine. The residue at position 233 (Lys233) is an N6-acetyllysine. NADP(+) contacts are provided by Lys237, Trp303, and His305. Tyr358 provides a ligand contact to heme. Ser417 and Ser434 each carry phosphoserine. NADP(+) contacts are provided by Gln442, Thr445, and Phe446. Lys449 and Lys480 each carry N6-acetyllysine; alternate. N6-succinyllysine; alternate occurs at positions 449 and 480. At Lys499 the chain carries N6-acetyllysine. The residue at position 511 (Thr511) is a Phosphothreonine. Ser517 is subject to Phosphoserine. Residues 524–527 (KANL) carry the Microbody targeting signal; atypical motif.

The protein belongs to the catalase family. As to quaternary structure, homotetramer. Interacts (via microbody targeting signal) with PEX5, monomeric form interacts with PEX5, leading to its translocation into peroxisomes. The cofactor is heme. NADP(+) serves as cofactor.

It localises to the peroxisome matrix. The catalysed reaction is 2 H2O2 = O2 + 2 H2O. Functionally, catalyzes the degradation of hydrogen peroxide (H(2)O(2)) generated by peroxisomal oxidases to water and oxygen, thereby protecting cells from the toxic effects of hydrogen peroxide. Promotes growth of cells including T-cells, B-cells, myeloid leukemia cells, melanoma cells, mastocytoma cells and normal and transformed fibroblast cells. The chain is Catalase (CAT) from Bos taurus (Bovine).